Consider the following 129-residue polypeptide: Small ribosomal subunit protein eS8 (129 aa).

A disordered region spans residues 1 to 29 (MSVWQGRSRRKPTGGLYRPARKKRKYEMG).

The protein belongs to the eukaryotic ribosomal protein eS8 family. As to quaternary structure, part of the 30S ribosomal subunit.

In Methanocaldococcus jannaschii (strain ATCC 43067 / DSM 2661 / JAL-1 / JCM 10045 / NBRC 100440) (Methanococcus jannaschii), this protein is Small ribosomal subunit protein eS8 (rps8e).